We begin with the raw amino-acid sequence, 508 residues long: Maturase K (508 aa).

Belongs to the intron maturase 2 family. MatK subfamily.

The protein resides in the plastid. The protein localises to the chloroplast. Usually encoded in the trnK tRNA gene intron. Probably assists in splicing its own and other chloroplast group II introns. The sequence is that of Maturase K from Stewartia pseudocamellia (Japanese stewartia).